The chain runs to 727 residues: Procollagen-lysine,2-oxoglutarate 5-dioxygenase 1 (727 aa).

The N-terminal stretch at 1–18 (MRPLLLLALLGWLLLAEA) is a signal peptide. N-linked (GlcNAc...) asparagine glycans are attached at residues N163, N197, and N538. Positions 636–727 (QFDLAFVVRY…RYIAVSFVDP (92 aa)) constitute a Fe2OG dioxygenase domain. Residues H656 and D658 each coordinate Fe cation. Residue N686 is glycosylated (N-linked (GlcNAc...) asparagine). H708 provides a ligand contact to Fe cation. The active site involves R718.

In terms of assembly, homodimer. Identified in a complex with P3H3 and P3H4. It depends on Fe(2+) as a cofactor. The cofactor is L-ascorbate.

It localises to the rough endoplasmic reticulum membrane. It carries out the reaction L-lysyl-[collagen] + 2-oxoglutarate + O2 = (5R)-5-hydroxy-L-lysyl-[collagen] + succinate + CO2. In terms of biological role, part of a complex composed of PLOD1, P3H3 and P3H4 that catalyzes hydroxylation of lysine residues in collagen alpha chains and is required for normal assembly and cross-linkling of collagen fibrils. Forms hydroxylysine residues in -Xaa-Lys-Gly- sequences in collagens. These hydroxylysines serve as sites of attachment for carbohydrate units and are essential for the stability of the intermolecular collagen cross-links. This is Procollagen-lysine,2-oxoglutarate 5-dioxygenase 1 (PLOD1) from Homo sapiens (Human).